Consider the following 216-residue polypeptide: Redox-sensing transcriptional repressor Rex (216 aa).

Positions 17-56 form a DNA-binding region, H-T-H motif; the sequence is IYFRYLTFLHDAGTDRISSAELSDAIKFDAATIRRDFSYF. 91–96 is a binding site for NAD(+); it reads GAGNLG.

This sequence belongs to the transcriptional regulatory Rex family. Homodimer.

Its subcellular location is the cytoplasm. Modulates transcription in response to changes in cellular NADH/NAD(+) redox state. This Leuconostoc citreum (strain KM20) protein is Redox-sensing transcriptional repressor Rex.